A 594-amino-acid polypeptide reads, in one-letter code: UvrABC system protein C (594 aa).

One can recognise a GIY-YIG domain in the interval 13-99 (NGSGVYQYFD…IKQLKPKYNI (87 aa)). Positions 205–240 (DKLIKELQLKMDRLSSNLRFEEALIYRDRISKIQKI) constitute a UVR domain.

Belongs to the UvrC family. In terms of assembly, interacts with UvrB in an incision complex.

The protein resides in the cytoplasm. Its function is as follows. The UvrABC repair system catalyzes the recognition and processing of DNA lesions. UvrC both incises the 5' and 3' sides of the lesion. The N-terminal half is responsible for the 3' incision and the C-terminal half is responsible for the 5' incision. The polypeptide is UvrABC system protein C (Helicobacter acinonychis (strain Sheeba)).